A 98-amino-acid polypeptide reads, in one-letter code: Large ribosomal subunit protein uL23 (98 aa).

Belongs to the universal ribosomal protein uL23 family. As to quaternary structure, part of the 50S ribosomal subunit. Contacts protein L29, and trigger factor when it is bound to the ribosome.

In terms of biological role, one of the early assembly proteins it binds 23S rRNA. One of the proteins that surrounds the polypeptide exit tunnel on the outside of the ribosome. Forms the main docking site for trigger factor binding to the ribosome. This chain is Large ribosomal subunit protein uL23, found in Rickettsia prowazekii (strain Madrid E).